Reading from the N-terminus, the 244-residue chain is Capsid protein (244 aa).

Residues 1–24 carry the Bipartite nuclear localization signal motif; it reads MSTSKRKRGDDSNWSKRVTKKKPS. The tract at residues 1–39 is disordered; it reads MSTSKRKRGDDSNWSKRVTKKKPSSAGLKRAGSKADRPS.

This sequence belongs to the geminiviridae capsid protein family. In terms of assembly, homomultimer. Interacts with the movement protein. Binds to single-stranded and double-stranded viral DNA.

It localises to the virion. Its subcellular location is the host nucleus. Functionally, encapsidates the viral genome into characteristic twinned ('geminate') particles. Binds the genomic viral ssDNA and shuttles it into and out of the cell nucleus. Plays a role in protection of the genome from degradation, virus acquisition and transmission by insect vectors, infectivity, and systemic movement. The CP of monopartite geminiviruses is absolutely essential for virus movement. This is Capsid protein from Avena sativa (Oat).